A 340-amino-acid chain; its full sequence is Ketol-acid reductoisomerase (NADP(+)) (340 aa).

A KARI N-terminal Rossmann domain is found at 1–183 (MAITVYYDKD…GGGRTGIIET (183 aa)). Residues 26 to 29 (FGSQ), Arg49, Ser52, Ser54, and 84 to 87 (DEIQ) contribute to the NADP(+) site. The active site involves His109. Gly135 contacts NADP(+). A KARI C-terminal knotted domain is found at 184-329 (TFKAETETDL…RNLRAMMPWI (146 aa)). Mg(2+) is bound by residues Asp192, Glu196, Glu228, and Glu232. Ser253 contributes to the substrate binding site.

This sequence belongs to the ketol-acid reductoisomerase family. Mg(2+) is required as a cofactor.

It carries out the reaction (2R)-2,3-dihydroxy-3-methylbutanoate + NADP(+) = (2S)-2-acetolactate + NADPH + H(+). The enzyme catalyses (2R,3R)-2,3-dihydroxy-3-methylpentanoate + NADP(+) = (S)-2-ethyl-2-hydroxy-3-oxobutanoate + NADPH + H(+). The protein operates within amino-acid biosynthesis; L-isoleucine biosynthesis; L-isoleucine from 2-oxobutanoate: step 2/4. It participates in amino-acid biosynthesis; L-valine biosynthesis; L-valine from pyruvate: step 2/4. Its function is as follows. Involved in the biosynthesis of branched-chain amino acids (BCAA). Catalyzes an alkyl-migration followed by a ketol-acid reduction of (S)-2-acetolactate (S2AL) to yield (R)-2,3-dihydroxy-isovalerate. In the isomerase reaction, S2AL is rearranged via a Mg-dependent methyl migration to produce 3-hydroxy-3-methyl-2-ketobutyrate (HMKB). In the reductase reaction, this 2-ketoacid undergoes a metal-dependent reduction by NADPH to yield (R)-2,3-dihydroxy-isovalerate. This is Ketol-acid reductoisomerase (NADP(+)) from Campylobacter jejuni subsp. jejuni serotype O:23/36 (strain 81-176).